Reading from the N-terminus, the 89-residue chain is UPF0237 protein CE1668 (89 aa).

Residues 4-78 (IMTVTGQDHT…KEQGLVIRIQ (75 aa)) enclose the ACT domain.

It belongs to the UPF0237 family.

The polypeptide is UPF0237 protein CE1668 (Corynebacterium efficiens (strain DSM 44549 / YS-314 / AJ 12310 / JCM 11189 / NBRC 100395)).